The primary structure comprises 149 residues: Oligosaccharyltransferase complex subunit OSTC (149 aa).

The Cytoplasmic segment spans residues 1–32 (METLYRVPFLVLECPNLKLKKPPWVHMPSAMT). Residues 33-53 (VYALVVVSYFLITGGIIYDVI) traverse the membrane as a helical segment. The Extracellular portion of the chain corresponds to 54–83 (VEPPSVGSMTDEHGHQRPVAFLAYRVNGQY). The chain crosses the membrane as a helical span at residues 84-104 (IMEGLASSFLFTMGGLGFIIL). The Cytoplasmic portion of the chain corresponds to 105 to 117 (DRSNAPNIPKLNR). A helical transmembrane segment spans residues 118-138 (FLLLFIGFVCVLLSFFMARVF). At 139-149 (MRMKLPGYLMG) the chain is on the extracellular side.

It belongs to the OSTC family. As to quaternary structure, component of STT3A-containing oligosaccharyl transferase (OST-A) complex. STT3A-containing complex assembly occurs through the formation of 3 subcomplexes. Subcomplex 1 contains RPN1 and TMEM258, subcomplex 2 contains the STT3A-specific subunits STT3A, DC2/OSTC, and KCP2 as well as the core subunit OST4, and subcomplex 3 contains RPN2, DAD1, and OST48. The OST-A complex can form stable complexes with the Sec61 complex or with both the Sec61 and TRAP complexes. Interacts with PSEN1 and NCSTN; indicative for an association with the gamma-secretase complex.

It localises to the endoplasmic reticulum. Its subcellular location is the membrane. It participates in protein modification; protein glycosylation. Its function is as follows. Subunit of STT3A-containing oligosaccharyl transferase (OST-A) complex that catalyzes the initial transfer of a defined glycan (Glc(3)Man(9)GlcNAc(2) in eukaryotes) from the lipid carrier dolichol-pyrophosphate to an asparagine residue within an Asn-X-Ser/Thr consensus motif in nascent polypeptide chains, the first step in protein N-glycosylation. N-glycosylation occurs cotranslationally and the complex associates with the Sec61 complex at the channel-forming translocon complex that mediates protein translocation across the endoplasmic reticulum (ER). Within the OST-A complex, acts as an adapter that anchors the OST-A complex to the Sec61 complex. May be involved in N-glycosylation of APP (amyloid-beta precursor protein). Can modulate gamma-secretase cleavage of APP by enhancing endoprotelysis of PSEN1. The protein is Oligosaccharyltransferase complex subunit OSTC of Canis lupus familiaris (Dog).